Here is a 299-residue protein sequence, read N- to C-terminus: MLTFQEIILKLQTYWGQQGCAILQPFDMEVGAGTSHPATCLRAIGPEPWNAAYVQPSRRPKDGRYGENPNRLQHYYQFQVALKPNPDNIQELYLGSLRELGIDPTVHDIRFVEDDWENPTLGAWGLGWEVWLNGMEVTQFTYFQQVGGIDCKPVLGEITYGIERLAMYLQGVENVYDLVWTVYPSGQVVTYGDVYHQNEVEQSTYNFEYANVPKLFELFSYYESEARRLLDVPLALPAYEMVLKAGHTFNLLDARGAISVTERAAYIGRVRTLSRGVAQAYYNAREALGFPMLKQDSAE.

This sequence belongs to the class-II aminoacyl-tRNA synthetase family. Tetramer of two alpha and two beta subunits.

Its subcellular location is the cytoplasm. The enzyme catalyses tRNA(Gly) + glycine + ATP = glycyl-tRNA(Gly) + AMP + diphosphate. The protein is Glycine--tRNA ligase alpha subunit of Laribacter hongkongensis (strain HLHK9).